The primary structure comprises 1321 residues: Indole-3-acetaldehyde oxidase (1321 aa).

Residues 1–90 form the 2Fe-2S ferredoxin-type domain; it reads MSLVFAINGQ…HCNITTSEGL (90 aa). Residues Cys-42, Cys-47, and Cys-50 each contribute to the [2Fe-2S] cluster site. In terms of domain architecture, FAD-binding PCMH-type spans 215 to 404; sequence VDSGMYRWCS…LSIEIPFWHS (190 aa).

It belongs to the xanthine dehydrogenase family. As to quaternary structure, aldehyde oxidases (AO) are homodimers and heterodimers of AO subunits. AO-beta is a AAO1-AAO2 heterodimer; AO-gamma is a AAO2 homodimer. AAO2 also forms a dimer with AAO3. Requires [2Fe-2S] cluster as cofactor. FAD is required as a cofactor. Mo-molybdopterin serves as cofactor. Weakly expressed in roots, leaves and seedlings. In seedlings, mostly expressed in lower part of hypocotyls. Detectable in seeds and mature siliques at low levels.

It localises to the cytoplasm. It carries out the reaction indole-3-acetaldehyde + O2 + H2O = (indol-3-yl)acetate + H2O2 + H(+). Strongly inhibited by iodoacetate, potassium cyanide (KCN), 2-mercaptoethanol, dithiothreitol (DTT), p-chloromercuribenzoate, menadione and estradiol. Weakly inhibited by 4'-(9-acridinylamino)methanesulfon-m-anisidine (mAMSA) and tritonX-100. Not affected by allopurinol. In higher plant aldehyde oxidases (AO) appear to be homo- and heterodimeric assemblies of AO subunits with probably different physiological functions. In vitro, AO-gamma uses heptaldehyde, benzaldehyde, naphthaldehyde and cinnamaldehyde as substrates; AO-beta uses indole-3-acetaldehyde (IAAld), indole-3-aldehyde (IAld) and naphtaldehyde; the AAO2-AAO3 dimer uses abscisic aldehyde. The sequence is that of Indole-3-acetaldehyde oxidase (AAO2) from Arabidopsis thaliana (Mouse-ear cress).